A 124-amino-acid chain; its full sequence is MATTNQLIRKGRTTLVEKSKVPALKACPQRRGVCTRVYTTTPKKPNSAMRKVCRVRLTSGFEVSSYIGGEGHNLQEHSVVLIRGGRVKDLPGVRYHTVRGSLDCAGVKDRNQSRSKYGAKRPKK.

3-methylthioaspartic acid is present on Asp89.

The protein belongs to the universal ribosomal protein uS12 family. In terms of assembly, part of the 30S ribosomal subunit. Contacts proteins S8 and S17. May interact with IF1 in the 30S initiation complex.

Its function is as follows. With S4 and S5 plays an important role in translational accuracy. Interacts with and stabilizes bases of the 16S rRNA that are involved in tRNA selection in the A site and with the mRNA backbone. Located at the interface of the 30S and 50S subunits, it traverses the body of the 30S subunit contacting proteins on the other side and probably holding the rRNA structure together. The combined cluster of proteins S8, S12 and S17 appears to hold together the shoulder and platform of the 30S subunit. This chain is Small ribosomal subunit protein uS12, found in Acinetobacter baumannii (strain AB307-0294).